Reading from the N-terminus, the 441-residue chain is Putative transporter AmpG 1 (441 aa).

The next 12 membrane-spanning stretches (helical) occupy residues 5-25 (SHLLIIWLFGLISGFNLMITG), 42-62 (IGILSFITLPYSINFLLAPIF), 78-98 (LSWICLTSTALIFLIYIFSFL), 104-124 (LVLFTFTALIISFFSAAQDTI), 143-163 (GIYIFGYRIGMLLAGSGAIYL), 171-191 (EIYKIFAGLVFIYLILLIVAA), 249-269 (SGNDISLAYFIILILIFLVLY), 297-317 (VGKFWGVVGAIIGGLVGGFIM), 325-345 (SIFLFGIIHALGHILFIFLEI), 352-372 (LLFITIGIESITGGMTMTAYI), 390-410 (FLSSMMGISRSIFPIISGYMV), and 413-433 (FGWQNFFLFTTIITIPSLLIL).

It belongs to the major facilitator superfamily.

The protein resides in the cell inner membrane. The chain is Putative transporter AmpG 1 (ampG1) from Rickettsia felis (strain ATCC VR-1525 / URRWXCal2) (Rickettsia azadi).